The primary structure comprises 85 residues: Large ribosomal subunit protein bL27 (85 aa).

Residues 1-21 are disordered; that stretch reads MAHKKAAGSTKNGRDSNAKRL.

The protein belongs to the bacterial ribosomal protein bL27 family.

The chain is Large ribosomal subunit protein bL27 from Hydrogenovibrio crunogenus (strain DSM 25203 / XCL-2) (Thiomicrospira crunogena).